Here is a 623-residue protein sequence, read N- to C-terminus: Glutathione import ATP-binding protein GsiA (623 aa).

ABC transporter domains are found at residues 15–269 (VSGL…QTLL) and 325–564 (LRSG…RKLM). Residues 49-56 (GESGSGKS) and 357-364 (GESGSGKS) each bind ATP.

This sequence belongs to the ABC transporter superfamily. Glutathione importer (TC 3.A.1.5.11) family. As to quaternary structure, the complex is composed of two ATP-binding proteins (GsiA), two transmembrane proteins (GsiC and GsiD) and a solute-binding protein (GsiB).

It localises to the cell inner membrane. It carries out the reaction glutathione(out) + ATP + H2O = glutathione(in) + ADP + phosphate + H(+). In terms of biological role, part of the ABC transporter complex GsiABCD involved in glutathione import. Responsible for energy coupling to the transport system. This chain is Glutathione import ATP-binding protein GsiA, found in Salmonella typhi.